Consider the following 521-residue polypeptide: GMP synthase [glutamine-hydrolyzing] (521 aa).

A Glutamine amidotransferase type-1 domain is found at 8–203 (KILILDFGAQ…VVDVCGCQTL (196 aa)). Cysteine 85 functions as the Nucleophile in the catalytic mechanism. Active-site residues include histidine 177 and glutamate 179. In terms of domain architecture, GMPS ATP-PPase spans 204-396 (WTAANIIDDQ…LGLPRTMVYR (193 aa)). Residue 231–237 (SGGVDSS) coordinates ATP.

In terms of assembly, homodimer.

It carries out the reaction XMP + L-glutamine + ATP + H2O = GMP + L-glutamate + AMP + diphosphate + 2 H(+). The protein operates within purine metabolism; GMP biosynthesis; GMP from XMP (L-Gln route): step 1/1. Functionally, catalyzes the synthesis of GMP from XMP. The sequence is that of GMP synthase [glutamine-hydrolyzing] from Stenotrophomonas maltophilia (strain K279a).